An 885-amino-acid chain; its full sequence is Translation initiation factor IF-2 (885 aa).

Disordered stretches follow at residues 135-159 (KAKA…AAAE) and 184-289 (QAEA…PESM). The span at 184–232 (QAEATKRKQDEEAAKAAEKARLLAEENSKRWAEEERQRLEAERYSDHHI) shows a compositional bias: basic and acidic residues. Positions 253–266 (GRRARNKNTAKSKR) are enriched in basic residues. Residues 267 to 276 (GGKDARDGRE) show a composition bias toward basic and acidic residues. In terms of domain architecture, tr-type G spans 385–554 (PRAPVVTIMG…LLQAEVLELK (170 aa)). The segment at 394–401 (GHVDHGKT) is G1. Position 394–401 (394–401 (GHVDHGKT)) interacts with GTP. Positions 419 to 423 (GITQH) are G2. A G3 region spans residues 440–443 (DTPG). GTP is bound by residues 440 to 444 (DTPGH) and 494 to 497 (NKMD). The segment at 494–497 (NKMD) is G4. Residues 530–532 (SAK) form a G5 region.

Belongs to the TRAFAC class translation factor GTPase superfamily. Classic translation factor GTPase family. IF-2 subfamily.

It localises to the cytoplasm. In terms of biological role, one of the essential components for the initiation of protein synthesis. Protects formylmethionyl-tRNA from spontaneous hydrolysis and promotes its binding to the 30S ribosomal subunits. Also involved in the hydrolysis of GTP during the formation of the 70S ribosomal complex. In Shewanella sp. (strain MR-7), this protein is Translation initiation factor IF-2.